The chain runs to 158 residues: RNA pyrophosphohydrolase (158 aa).

Positions 8 to 152 constitute a Nudix hydrolase domain; sequence PYRPCAGVML…KRALYRGLIE (145 aa). The Nudix box motif lies at 42–63; it reads GGIDEGEDAEKAAIRELGEETG.

Belongs to the Nudix hydrolase family. RppH subfamily. It depends on a divalent metal cation as a cofactor.

In terms of biological role, accelerates the degradation of transcripts by removing pyrophosphate from the 5'-end of triphosphorylated RNA, leading to a more labile monophosphorylated state that can stimulate subsequent ribonuclease cleavage. This is RNA pyrophosphohydrolase from Sphingopyxis alaskensis (strain DSM 13593 / LMG 18877 / RB2256) (Sphingomonas alaskensis).